A 1047-amino-acid polypeptide reads, in one-letter code: [F-actin]-monooxygenase MICAL1 (1047 aa).

Residues 1–489 are monooxygenase domain; sequence MASPTSTNPA…QDLYDIMDKE (489 aa). FAD-binding positions include cysteine 95, 114 to 116, 121 to 123, phenylalanine 181, tyrosine 293, and aspartate 393; these read EKR and RHN. Threonine 475 bears the Phosphothreonine mark. In terms of domain architecture, Calponin-homology (CH) spans 507–611; the sequence is SAGTEELLHW…YLSHFHSAFK (105 aa). The residue at position 616 (serine 616) is a Phosphoserine. Residues 644 to 672 form a disordered region; that stretch reads RTKVEEETPCTEEPPVSEPSVPPALPSEH. A compositionally biased stretch (pro residues) spans 659–668; that stretch reads VSEPSVPPAL. The region spanning 679–741 is the LIM zinc-binding domain; it reads DVCELCGKRL…LQHLPQEDQK (63 aa). Zn(2+) contacts are provided by cysteine 681, cysteine 684, histidine 702, cysteine 705, cysteine 708, cysteine 711, cysteine 731, and histidine 734. Disordered regions lie at residues 739 to 787 and 849 to 872; these read DQKE…QPAR and EKGE…PPPL. Positions 745–767 are enriched in polar residues; sequence NNGSPENQELPTPGDSTTQSGPS. Phosphoserine occurs at positions 777 and 781. Over residues 851–868 the composition is skewed to acidic residues; it reads GEEEEEEEEEEEEEEEEL. Positions 905–1047 constitute a bMERB domain; that stretch reads KEEEMKRFCK…EERRLREMPV (143 aa). The stretch at 912–996 forms a coiled coil; that stretch reads FCKAQAIQRR…LEEKQRQLDH (85 aa).

This sequence belongs to the Mical family. Interacts with STK38 and STK38L. Associates with the SH3 domain of NEDD9. Interacts with VIM and PLXNA3. Interacts with RAB1B, RAB8A, RAB10, RAB13 and RAB15 (in their GTP-bound forms); binding to RAB1B is of low affinity compared to other Rab proteins; at least in case of RAB8A and RAB10 can bind 2 molecules of the Rab proteins simultaneously. Interacts with GRAF1/ARHGAP26, GRAF2/ARHGAP10, RAB8A, RAB8B and RAB10; may bind simultaneously to GRAFs and Rabs and connects GRAFs to Rabs. Does not interact with RAB1 and RAB11A. Requires FAD as cofactor.

It localises to the cytoplasm. The protein resides in the cytoskeleton. The protein localises to the endosome membrane. It is found in the midbody. The catalysed reaction is L-methionyl-[F-actin] + NADPH + O2 + H(+) = L-methionyl-(R)-S-oxide-[F-actin] + NADP(+) + H2O. It catalyses the reaction NADPH + O2 + H(+) = H2O2 + NADP(+). In terms of biological role, monooxygenase that promotes depolymerization of F-actin by mediating oxidation of specific methionine residues on actin to form methionine-sulfoxide, resulting in actin filament disassembly and preventing repolymerization. In the absence of actin, it also functions as a NADPH oxidase producing H(2)O(2). Acts as a cytoskeletal regulator that connects NEDD9 to intermediate filaments. Also acts as a negative regulator of apoptosis via its interaction with STK38 and STK38L; acts by antagonizing STK38 and STK38L activation by MST1/STK4. Involved in regulation of lamina-specific connectivity in the nervous system such as the development of lamina-restricted hippocampal connections. Through redox regulation of the actin cytoskeleton controls the intracellular distribution of secretory vesicles containing L1/neurofascin/NgCAM family proteins in neurons, thereby regulating their cell surface levels. May act as Rab effector protein and play a role in vesicle trafficking. Promotes endosomal tubule extension by associating with RAB8 (RAB8A or RAB8B), RAB10 and GRAF (GRAF1/ARHGAP26 or GRAF2/ARHGAP10) on the endosomal membrane which may connect GRAFs to Rabs, thereby participating in neosynthesized Rab8-Rab10-Rab11-dependent protein export. This Rattus norvegicus (Rat) protein is [F-actin]-monooxygenase MICAL1 (Mical1).